A 1266-amino-acid polypeptide reads, in one-letter code: Phosphatidylinositol 3,4,5-trisphosphate 5-phosphatase 2A (1266 aa).

The region spanning 15–111 (WMHRDLSRAA…GLVTTLLYPV (97 aa)) is the SH2 domain. The segment covering 114-123 (EETTEDRDYS) has biased composition (basic and acidic residues). Disordered regions lie at residues 114–159 (EETT…NVTA) and 879–951 (DMGG…DATT). Positions 136-159 (TASTSSMTGSALVSTDTPPENVTA) are enriched in polar residues. Composition is skewed to basic and acidic residues over residues 915-924 (RVSEEGEKSS) and 931-944 (TKEE…KQDP). An NPXY motif motif is present at residues 958–961 (NPAY). The residue at position 961 (tyrosine 961) is a Phosphotyrosine. 2 disordered regions span residues 986–1132 (PLAN…SALD) and 1147–1174 (EVEY…SFPS). Over residues 994–1012 (PPAGSVGKSKPPSGSSAQG) the composition is skewed to low complexity. Pro residues predominate over residues 1045–1056 (RPPPDFPPPPLP). Residues 1203 to 1266 (SVDCSVGEWL…LLASLKQQQK (64 aa)) enclose the SAM domain.

Belongs to the inositol 1,4,5-trisphosphate 5-phosphatase family. In terms of processing, tyrosine phosphorylated by the members of the SRC family after exposure to a diverse array of extracellular stimuli.

It is found in the cytoplasm. The protein resides in the cytosol. The protein localises to the cytoskeleton. It localises to the membrane. Its subcellular location is the cell projection. It is found in the filopodium. The protein resides in the lamellipodium. The protein localises to the nucleus. It localises to the nucleus speckle. The enzyme catalyses a 1,2-diacyl-sn-glycero-3-phospho-(1D-myo-inositol-3,4,5-trisphosphate) + H2O = a 1,2-diacyl-sn-glycero-3-phospho-(1D-myo-inositol-3,4-bisphosphate) + phosphate. Its function is as follows. Phosphatidylinositol (PtdIns) phosphatase that specifically hydrolyzes the 5-phosphate of phosphatidylinositol-3,4,5-trisphosphate (PtdIns(3,4,5)P3) to produce PtdIns(3,4)P2, thereby negatively regulating the PI3K (phosphoinositide 3-kinase) pathways. Plays a central role in regulation of PI3K-dependent insulin signaling, although the precise molecular mechanisms and signaling pathways remain unclear. Part of a signaling pathway that regulates actin cytoskeleton remodeling. Required for the maintenance and dynamic remodeling of actin structures as well as in endocytosis, having a major impact on ligand-induced EGFR internalization and degradation. Participates in regulation of cortical and submembraneous actin. Regulates cell adhesion and cell spreading. Acts as a negative regulator of the FC-gamma-RIIA receptor (FCGR2A). Mediates signaling from the FC-gamma-RIIB receptor (FCGR2B), playing a central role in terminating signal transduction from activating immune/hematopoietic cell receptor systems. May also hydrolyze PtdIns(1,3,4,5)P4, and could thus affect the levels of the higher inositol polyphosphates like InsP6. The sequence is that of Phosphatidylinositol 3,4,5-trisphosphate 5-phosphatase 2A (inppl1a) from Danio rerio (Zebrafish).